We begin with the raw amino-acid sequence, 211 residues long: Protein-L-isoaspartate O-methyltransferase (211 aa).

The active site involves Ser-60.

The protein belongs to the methyltransferase superfamily. L-isoaspartyl/D-aspartyl protein methyltransferase family.

The protein resides in the cytoplasm. It catalyses the reaction [protein]-L-isoaspartate + S-adenosyl-L-methionine = [protein]-L-isoaspartate alpha-methyl ester + S-adenosyl-L-homocysteine. In terms of biological role, catalyzes the methyl esterification of L-isoaspartyl residues in peptides and proteins that result from spontaneous decomposition of normal L-aspartyl and L-asparaginyl residues. It plays a role in the repair and/or degradation of damaged proteins. The chain is Protein-L-isoaspartate O-methyltransferase from Pseudomonas fluorescens (strain ATCC BAA-477 / NRRL B-23932 / Pf-5).